Consider the following 196-residue polypeptide: ATP-dependent Clp protease proteolytic subunit (196 aa).

The active-site Nucleophile is serine 101. Residue histidine 126 is part of the active site.

It belongs to the peptidase S14 family. Component of the chloroplastic Clp protease core complex.

It is found in the plastid. The protein localises to the chloroplast stroma. The catalysed reaction is Hydrolysis of proteins to small peptides in the presence of ATP and magnesium. alpha-casein is the usual test substrate. In the absence of ATP, only oligopeptides shorter than five residues are hydrolyzed (such as succinyl-Leu-Tyr-|-NHMec, and Leu-Tyr-Leu-|-Tyr-Trp, in which cleavage of the -Tyr-|-Leu- and -Tyr-|-Trp bonds also occurs).. Functionally, cleaves peptides in various proteins in a process that requires ATP hydrolysis. Has a chymotrypsin-like activity. Plays a major role in the degradation of misfolded proteins. The sequence is that of ATP-dependent Clp protease proteolytic subunit from Lepidium virginicum (Virginia pepperweed).